We begin with the raw amino-acid sequence, 265 residues long: UPF0354 protein GWCH70_2742 (265 aa).

It belongs to the UPF0354 family.

The protein is UPF0354 protein GWCH70_2742 of Geobacillus sp. (strain WCH70).